The primary structure comprises 506 residues: GMP synthase [glutamine-hydrolyzing] (506 aa).

The Glutamine amidotransferase type-1 domain maps to 4–192; sequence KLIILDFGSQ…FLDICGMKRD (189 aa). The active-site Nucleophile is the cysteine 79. Residues histidine 167 and glutamate 169 contribute to the active site. One can recognise a GMPS ATP-PPase domain in the interval 193–381; that stretch reads WTPASFIEAT…LGMMPHLIHR (189 aa). ATP is bound at residue 220–226; sequence SGGVDSS.

In terms of assembly, homodimer.

It carries out the reaction XMP + L-glutamine + ATP + H2O = GMP + L-glutamate + AMP + diphosphate + 2 H(+). It functions in the pathway purine metabolism; GMP biosynthesis; GMP from XMP (L-Gln route): step 1/1. In terms of biological role, catalyzes the synthesis of GMP from XMP. This Porphyromonas gingivalis (strain ATCC BAA-308 / W83) protein is GMP synthase [glutamine-hydrolyzing].